Here is a 240-residue protein sequence, read N- to C-terminus: 31 kDa outer-membrane immunogenic protein (240 aa).

An N-terminal signal peptide occupies residues 1-19; sequence MKSVILASIAAMFATSAMA. The segment at 48–83 is epitope recognized by the monoclonal antibody A59/10F09/G10; the sequence is NAGYAGGKFKHPFSSFDKEDNEQVSGSLDVTAGGFV.

It belongs to the Omp25/RopB family. Oligomeric.

The protein localises to the cell outer membrane. Major outer membrane protein associated with peptidoglycans. May function as a porin. The chain is 31 kDa outer-membrane immunogenic protein (omp31) from Brucella melitensis biotype 1 (strain ATCC 23456 / CCUG 17765 / NCTC 10094 / 16M).